Reading from the N-terminus, the 224-residue chain is Large ribosomal subunit protein uL3 (224 aa).

Residue Q159 is modified to N5-methylglutamine.

The protein belongs to the universal ribosomal protein uL3 family. Part of the 50S ribosomal subunit. Forms a cluster with proteins L14 and L19. Post-translationally, methylated by PrmB.

One of the primary rRNA binding proteins, it binds directly near the 3'-end of the 23S rRNA, where it nucleates assembly of the 50S subunit. This Janthinobacterium sp. (strain Marseille) (Minibacterium massiliensis) protein is Large ribosomal subunit protein uL3.